Here is a 129-residue protein sequence, read N- to C-terminus: Phosphoribosyl-AMP cyclohydrolase (129 aa).

Residue aspartate 85 participates in Mg(2+) binding. Cysteine 86 lines the Zn(2+) pocket. Residues aspartate 87 and aspartate 89 each contribute to the Mg(2+) site. Zn(2+) contacts are provided by cysteine 102 and cysteine 109.

Belongs to the PRA-CH family. Homodimer. The cofactor is Mg(2+). Zn(2+) is required as a cofactor.

It localises to the cytoplasm. It catalyses the reaction 1-(5-phospho-beta-D-ribosyl)-5'-AMP + H2O = 1-(5-phospho-beta-D-ribosyl)-5-[(5-phospho-beta-D-ribosylamino)methylideneamino]imidazole-4-carboxamide. It functions in the pathway amino-acid biosynthesis; L-histidine biosynthesis; L-histidine from 5-phospho-alpha-D-ribose 1-diphosphate: step 3/9. Functionally, catalyzes the hydrolysis of the adenine ring of phosphoribosyl-AMP. This chain is Phosphoribosyl-AMP cyclohydrolase, found in Methanococcus maripaludis (strain C6 / ATCC BAA-1332).